A 282-amino-acid polypeptide reads, in one-letter code: Bifunctional protein FolD (282 aa).

Residues 166–168 and Ser-191 contribute to the NADP(+) site; that span reads GRS.

It belongs to the tetrahydrofolate dehydrogenase/cyclohydrolase family. In terms of assembly, homodimer.

The enzyme catalyses (6R)-5,10-methylene-5,6,7,8-tetrahydrofolate + NADP(+) = (6R)-5,10-methenyltetrahydrofolate + NADPH. The catalysed reaction is (6R)-5,10-methenyltetrahydrofolate + H2O = (6R)-10-formyltetrahydrofolate + H(+). It functions in the pathway one-carbon metabolism; tetrahydrofolate interconversion. In terms of biological role, catalyzes the oxidation of 5,10-methylenetetrahydrofolate to 5,10-methenyltetrahydrofolate and then the hydrolysis of 5,10-methenyltetrahydrofolate to 10-formyltetrahydrofolate. In Acidovorax sp. (strain JS42), this protein is Bifunctional protein FolD.